The following is a 492-amino-acid chain: Ketol-acid reductoisomerase (NADP(+)) (492 aa).

The 195-residue stretch at L14–S208 folds into the KARI N-terminal Rossmann domain. NADP(+) is bound by residues C45–Q48, R68, R76, S78, and D108–Q110. H132 is a catalytic residue. G158 serves as a coordination point for NADP(+). KARI C-terminal knotted domains are found at residues S209–K344 and Y345–M485. Positions 217, 221, 389, and 393 each coordinate Mg(2+). Residue S414 participates in substrate binding.

Belongs to the ketol-acid reductoisomerase family. Mg(2+) serves as cofactor.

The enzyme catalyses (2R)-2,3-dihydroxy-3-methylbutanoate + NADP(+) = (2S)-2-acetolactate + NADPH + H(+). It carries out the reaction (2R,3R)-2,3-dihydroxy-3-methylpentanoate + NADP(+) = (S)-2-ethyl-2-hydroxy-3-oxobutanoate + NADPH + H(+). The protein operates within amino-acid biosynthesis; L-isoleucine biosynthesis; L-isoleucine from 2-oxobutanoate: step 2/4. It participates in amino-acid biosynthesis; L-valine biosynthesis; L-valine from pyruvate: step 2/4. Functionally, involved in the biosynthesis of branched-chain amino acids (BCAA). Catalyzes an alkyl-migration followed by a ketol-acid reduction of (S)-2-acetolactate (S2AL) to yield (R)-2,3-dihydroxy-isovalerate. In the isomerase reaction, S2AL is rearranged via a Mg-dependent methyl migration to produce 3-hydroxy-3-methyl-2-ketobutyrate (HMKB). In the reductase reaction, this 2-ketoacid undergoes a metal-dependent reduction by NADPH to yield (R)-2,3-dihydroxy-isovalerate. In Haemophilus influenzae (strain PittGG), this protein is Ketol-acid reductoisomerase (NADP(+)).